The sequence spans 382 residues: Dual-specificity RNA methyltransferase RlmN (382 aa).

Glutamate 91 (proton acceptor) is an active-site residue. Residues 97–339 (EEDRGTLCIS…TTIRKTRGDD (243 aa)) form the Radical SAM core domain. A disulfide bond links cysteine 104 and cysteine 344. [4Fe-4S] cluster contacts are provided by cysteine 111, cysteine 115, and cysteine 118. S-adenosyl-L-methionine is bound by residues 165–166 (GE), serine 197, 219–221 (SLH), and asparagine 301. The active-site S-methylcysteine intermediate is the cysteine 344.

This sequence belongs to the radical SAM superfamily. RlmN family. It depends on [4Fe-4S] cluster as a cofactor.

The protein localises to the cytoplasm. The catalysed reaction is adenosine(2503) in 23S rRNA + 2 reduced [2Fe-2S]-[ferredoxin] + 2 S-adenosyl-L-methionine = 2-methyladenosine(2503) in 23S rRNA + 5'-deoxyadenosine + L-methionine + 2 oxidized [2Fe-2S]-[ferredoxin] + S-adenosyl-L-homocysteine. The enzyme catalyses adenosine(37) in tRNA + 2 reduced [2Fe-2S]-[ferredoxin] + 2 S-adenosyl-L-methionine = 2-methyladenosine(37) in tRNA + 5'-deoxyadenosine + L-methionine + 2 oxidized [2Fe-2S]-[ferredoxin] + S-adenosyl-L-homocysteine. In terms of biological role, specifically methylates position 2 of adenine 2503 in 23S rRNA and position 2 of adenine 37 in tRNAs. m2A2503 modification seems to play a crucial role in the proofreading step occurring at the peptidyl transferase center and thus would serve to optimize ribosomal fidelity. The protein is Dual-specificity RNA methyltransferase RlmN of Albidiferax ferrireducens (strain ATCC BAA-621 / DSM 15236 / T118) (Rhodoferax ferrireducens).